Reading from the N-terminus, the 186-residue chain is uncharacterized protein (186 aa).

The N-terminal stretch at 1–21 (MIHVKYIILGFIMVSSLNLYA) is a signal peptide.

This is an uncharacterized protein from Rickettsia conorii (strain ATCC VR-613 / Malish 7).